The following is a 734-amino-acid chain: Photosystem I P700 chlorophyll a apoprotein A2 (734 aa).

8 helical membrane-spanning segments follow: residues 46 to 69 (IFAS…FHVA), 135 to 158 (LYTG…LHLQ), 175 to 199 (LNHH…HVAI), 273 to 291 (IAHH…GHMY), 330 to 353 (IHFQ…QHMY), 369 to 395 (AALY…IFFI), 417 to 439 (AIIS…LYVH), and 517 to 535 (FLVH…LILV). Positions 559 and 568 each coordinate [4Fe-4S] cluster. 2 helical membrane-spanning segments follow: residues 575–596 (AFYL…YWHW) and 643–665 (LSVW…MFLI). The chlorophyll a site is built by H654, M662, and Y670. Residue W671 participates in phylloquinone binding. A helical transmembrane segment spans residues 707-727 (LVGLAHFSVGYIFTYAAFLIA).

Belongs to the PsaA/PsaB family. In terms of assembly, the PsaA/B heterodimer binds the P700 chlorophyll special pair and subsequent electron acceptors. PSI consists of a core antenna complex that captures photons, and an electron transfer chain that converts photonic excitation into a charge separation. The eukaryotic PSI reaction center is composed of at least 11 subunits. P700 is a chlorophyll a/chlorophyll a' dimer, A0 is one or more chlorophyll a, A1 is one or both phylloquinones and FX is a shared 4Fe-4S iron-sulfur center. serves as cofactor.

The protein resides in the plastid. Its subcellular location is the chloroplast thylakoid membrane. The enzyme catalyses reduced [plastocyanin] + hnu + oxidized [2Fe-2S]-[ferredoxin] = oxidized [plastocyanin] + reduced [2Fe-2S]-[ferredoxin]. Its function is as follows. PsaA and PsaB bind P700, the primary electron donor of photosystem I (PSI), as well as the electron acceptors A0, A1 and FX. PSI is a plastocyanin-ferredoxin oxidoreductase, converting photonic excitation into a charge separation, which transfers an electron from the donor P700 chlorophyll pair to the spectroscopically characterized acceptors A0, A1, FX, FA and FB in turn. Oxidized P700 is reduced on the lumenal side of the thylakoid membrane by plastocyanin. The protein is Photosystem I P700 chlorophyll a apoprotein A2 of Phaseolus vulgaris (Kidney bean).